The primary structure comprises 485 residues: N-succinylglutamate 5-semialdehyde dehydrogenase (485 aa).

220-225 lines the NAD(+) pocket; that stretch reads GSANTG. Active-site residues include glutamate 243 and cysteine 278.

Belongs to the aldehyde dehydrogenase family. AstD subfamily.

It carries out the reaction N-succinyl-L-glutamate 5-semialdehyde + NAD(+) + H2O = N-succinyl-L-glutamate + NADH + 2 H(+). It functions in the pathway amino-acid degradation; L-arginine degradation via AST pathway; L-glutamate and succinate from L-arginine: step 4/5. Functionally, catalyzes the NAD-dependent reduction of succinylglutamate semialdehyde into succinylglutamate. This Aliivibrio fischeri (strain ATCC 700601 / ES114) (Vibrio fischeri) protein is N-succinylglutamate 5-semialdehyde dehydrogenase.